The chain runs to 222 residues: Recombination protein RecR (222 aa).

The C4-type zinc-finger motif lies at 57-72; the sequence is CPVCFNITDAERCDVC. Residues 80-173 enclose the Toprim domain; the sequence is SVICVVEEPG…VVSRIAYGLP (94 aa). Residues 189–222 form a disordered region; that stretch reads ALSGRRRVSEPASPPPPRRNDEEQDGAPARPPSH.

This sequence belongs to the RecR family.

Its function is as follows. May play a role in DNA repair. It seems to be involved in an RecBC-independent recombinational process of DNA repair. It may act with RecF and RecO. The protein is Recombination protein RecR of Deinococcus geothermalis (strain DSM 11300 / CIP 105573 / AG-3a).